We begin with the raw amino-acid sequence, 245 residues long: 1-(5-phosphoribosyl)-5-[(5-phosphoribosylamino)methylideneamino] imidazole-4-carboxamide isomerase (245 aa).

Catalysis depends on D10, which acts as the Proton acceptor. D129 functions as the Proton donor in the catalytic mechanism.

Belongs to the HisA/HisF family.

Its subcellular location is the cytoplasm. It catalyses the reaction 1-(5-phospho-beta-D-ribosyl)-5-[(5-phospho-beta-D-ribosylamino)methylideneamino]imidazole-4-carboxamide = 5-[(5-phospho-1-deoxy-D-ribulos-1-ylimino)methylamino]-1-(5-phospho-beta-D-ribosyl)imidazole-4-carboxamide. It functions in the pathway amino-acid biosynthesis; L-histidine biosynthesis; L-histidine from 5-phospho-alpha-D-ribose 1-diphosphate: step 4/9. In Parafrankia sp. (strain EAN1pec), this protein is 1-(5-phosphoribosyl)-5-[(5-phosphoribosylamino)methylideneamino] imidazole-4-carboxamide isomerase.